We begin with the raw amino-acid sequence, 88 residues long: Small ribosomal subunit protein bS20 (88 aa).

Positions 1–27 (MANSKSAKKRALQSEKRRQHNASRRSM) are disordered.

Belongs to the bacterial ribosomal protein bS20 family.

Binds directly to 16S ribosomal RNA. This is Small ribosomal subunit protein bS20 from Shewanella woodyi (strain ATCC 51908 / MS32).